A 136-amino-acid polypeptide reads, in one-letter code: Ribosome-binding factor A (136 aa).

It belongs to the RbfA family. In terms of assembly, monomer. Binds 30S ribosomal subunits, but not 50S ribosomal subunits or 70S ribosomes.

Its subcellular location is the cytoplasm. Functionally, one of several proteins that assist in the late maturation steps of the functional core of the 30S ribosomal subunit. Associates with free 30S ribosomal subunits (but not with 30S subunits that are part of 70S ribosomes or polysomes). Required for efficient processing of 16S rRNA. May interact with the 5'-terminal helix region of 16S rRNA. In Photorhabdus laumondii subsp. laumondii (strain DSM 15139 / CIP 105565 / TT01) (Photorhabdus luminescens subsp. laumondii), this protein is Ribosome-binding factor A.